The sequence spans 442 residues: tRNA modification GTPase MnmE (442 aa).

Residues arginine 21, glutamate 79, and lysine 118 each coordinate (6S)-5-formyl-5,6,7,8-tetrahydrofolate. The region spanning glycine 215–asparagine 365 is the TrmE-type G domain. Residues asparagine 225–serine 230, threonine 244–threonine 250, and aspartate 269–glycine 272 each bind GTP. Mg(2+) contacts are provided by serine 229 and threonine 250. Lysine 442 contributes to the (6S)-5-formyl-5,6,7,8-tetrahydrofolate binding site.

The protein belongs to the TRAFAC class TrmE-Era-EngA-EngB-Septin-like GTPase superfamily. TrmE GTPase family. Homodimer. Heterotetramer of two MnmE and two MnmG subunits. Requires K(+) as cofactor.

The protein localises to the cytoplasm. In terms of biological role, exhibits a very high intrinsic GTPase hydrolysis rate. Involved in the addition of a carboxymethylaminomethyl (cmnm) group at the wobble position (U34) of certain tRNAs, forming tRNA-cmnm(5)s(2)U34. The sequence is that of tRNA modification GTPase MnmE from Mycoplasma mobile (strain ATCC 43663 / 163K / NCTC 11711) (Mesomycoplasma mobile).